Reading from the N-terminus, the 54-residue chain is UPF0391 membrane protein Oant_1245 (54 aa).

2 consecutive transmembrane segments (helical) span residues 5–25 and 29–48; these read ALVFLVVALVAGALGFGGIAG and GIAQILFFVFLALLVISLIA.

This sequence belongs to the UPF0391 family.

The protein resides in the cell membrane. The chain is UPF0391 membrane protein Oant_1245 from Brucella anthropi (strain ATCC 49188 / DSM 6882 / CCUG 24695 / JCM 21032 / LMG 3331 / NBRC 15819 / NCTC 12168 / Alc 37) (Ochrobactrum anthropi).